A 429-amino-acid chain; its full sequence is Glutamate-1-semialdehyde 2,1-aminomutase 2 (429 aa).

The residue at position 268 (Lys268) is an N6-(pyridoxal phosphate)lysine.

It belongs to the class-III pyridoxal-phosphate-dependent aminotransferase family. HemL subfamily. Homodimer. The cofactor is pyridoxal 5'-phosphate.

The protein resides in the cytoplasm. It carries out the reaction (S)-4-amino-5-oxopentanoate = 5-aminolevulinate. It participates in porphyrin-containing compound metabolism; protoporphyrin-IX biosynthesis; 5-aminolevulinate from L-glutamyl-tRNA(Glu): step 2/2. The chain is Glutamate-1-semialdehyde 2,1-aminomutase 2 from Bacillus cereus (strain B4264).